A 690-amino-acid chain; its full sequence is Protein arginine N-methyltransferase 7 (690 aa).

SAM-dependent MTase PRMT-type domains are found at residues 14-357 (QNSW…YSLW) and 366-690 (TKSV…QKKL).

Belongs to the class I-like SAM-binding methyltransferase superfamily. Protein arginine N-methyltransferase family. PRMT7 subfamily.

Essential arginine methyltransferase that can both catalyze the formation of omega-N monomethylarginine (MMA) and symmetrical dimethylarginine (sDMA). Specifically mediates the symmetrical dimethylation of arginine residues in the small nuclear ribonucleoproteins SmD1 and SmD3. In Drosophila erecta (Fruit fly), this protein is Protein arginine N-methyltransferase 7 (Art7).